The primary structure comprises 297 residues: tRNA (guanine-N(7)-)-methyltransferase (297 aa).

S-adenosyl-L-methionine-binding positions include G101, 124-125, 171-172, and C191; these read EI and NT. The active site involves D194. 270 to 272 provides a ligand contact to S-adenosyl-L-methionine; that stretch reads TEE.

Belongs to the class I-like SAM-binding methyltransferase superfamily. TrmB family. As to quaternary structure, forms a complex with trm82.

It is found in the nucleus. The enzyme catalyses guanosine(46) in tRNA + S-adenosyl-L-methionine = N(7)-methylguanosine(46) in tRNA + S-adenosyl-L-homocysteine. The protein operates within tRNA modification; N(7)-methylguanine-tRNA biosynthesis. Its function is as follows. Catalyzes the formation of N(7)-methylguanine at position 46 (m7G46) in tRNA. The polypeptide is tRNA (guanine-N(7)-)-methyltransferase (trm8) (Aspergillus niger (strain ATCC MYA-4892 / CBS 513.88 / FGSC A1513)).